A 422-amino-acid polypeptide reads, in one-letter code: Inhibitor of growth protein 1 (422 aa).

Residues 261–349 (ELGDTAGNSG…EASPADLPID (89 aa)) are disordered. Lysine 278 participates in a covalent cross-link: Glycyl lysine isopeptide (Lys-Gly) (interchain with G-Cter in SUMO2). Residues 297–314 (RNNENRENASSNHDHDDG) show a composition bias toward basic and acidic residues. Over residues 322 to 334 (KKAKTSKKKKRSK) the composition is skewed to basic residues. The PHD-type zinc finger occupies 353–402 (PTYCLCNQVSYGEMIGCDNDECPIEWFHFSCVGLNHKPKGKWYCPKCRGE). Zn(2+) contacts are provided by cysteine 356, cysteine 358, cysteine 369, cysteine 374, histidine 380, cysteine 383, cysteine 396, and cysteine 399. Positions 405–422 (KTMDKALEKSKKERAYNR) are PBR.

The protein belongs to the ING family. Interacts with H3K4me3 and to a lesser extent with H3K4me2. Interacts with TP53. Isoform 2 interacts with RSL1D1. In terms of tissue distribution, isoform 2 was expressed in all normal tissues and cells examined, as well as in all breast cancer and melanoma cell lines examined. Isoform 3 was expressed in testis, liver, and kidney, weakly expressed in colon and brain and not expressed in breast and cultured melanocytes. Isoform 4 was highly expressed in testis and weakly expressed in brain, but not expressed in breast, colon, kidney, melanocytes, breast cancer or melanoma cell lines.

The protein resides in the nucleus. In terms of biological role, cooperates with p53/TP53 in the negative regulatory pathway of cell growth by modulating p53-dependent transcriptional activation. Implicated as a tumor suppressor gene. The polypeptide is Inhibitor of growth protein 1 (ING1) (Homo sapiens (Human)).